A 3301-amino-acid polypeptide reads, in one-letter code: Cadherin EGF LAG seven-pass G-type receptor 3 (3301 aa).

Residues 1 to 31 form the signal peptide; it reads MARRPLWWGLPGPSTPVLLLLLLSLFPFSRE. Residues 32–2531 lie on the Extracellular side of the membrane; it reads ELGGGGDQDW…RLEGDLELLA (2500 aa). 2 disordered regions span residues 148–189 and 202–314; these read LPLD…ARRS and KLWE…NRHP. Over residues 267–276 the composition is skewed to basic residues; it reads MRSRGLFRRR. Cadherin domains lie at 317-424, 425-536, 537-642, 643-747, 748-849, 850-952, 953-1058, 1059-1160, and 1161-1257; these read PQYN…APVF, EQAQ…APQF, SEKR…APIF, VSTP…RPEF, TMKE…RPVF, QSAH…APQF, VASH…APVF, PAEE…SPVL, and NNFQ…VVII. Asparagine 623 carries N-linked (GlcNAc...) asparagine glycosylation. Residue asparagine 838 is glycosylated (N-linked (GlcNAc...) asparagine). 4 N-linked (GlcNAc...) asparagine glycosylation sites follow: asparagine 1173, asparagine 1213, asparagine 1308, and asparagine 1318. Residues 1366-1424 enclose the EGF-like 1; calcium-binding domain; the sequence is DDNVCLREPCENYMKCVSVLRFDSSAPFLASTSTLFRPIQPIAGLRCRCPPGFTGDFCE. Disulfide bonds link cysteine 1370–cysteine 1381, cysteine 1375–cysteine 1412, cysteine 1414–cysteine 1423, cysteine 1430–cysteine 1441, cysteine 1435–cysteine 1450, cysteine 1452–cysteine 1459, cysteine 1468–cysteine 1479, cysteine 1473–cysteine 1489, and cysteine 1491–cysteine 1502. Residues 1426–1460 form the EGF-like 2; calcium-binding domain; the sequence is ELDLCYSNPCRNGGACARREGGYTCVCRPRFTDCE. The 40-residue stretch at 1464-1503 folds into the EGF-like 3; calcium-binding domain; sequence EAGRCVPGVCRNGGTCTNAPNGGFRCQCPAGGAFEGPRCE. Residues 1504–1708 enclose the Laminin G-like 1 domain; sequence VAARSFPPSS…VANNGTMAGC (205 aa). Asparagine 1638 and asparagine 1702 each carry an N-linked (GlcNAc...) asparagine glycan. 4 cysteine pairs are disulfide-bonded: cysteine 1682–cysteine 1708, cysteine 1715–cysteine 1726, cysteine 1720–cysteine 1735, and cysteine 1737–cysteine 1746. Residues 1711–1747 enclose the EGF-like 4; calcium-binding domain; sequence KSHFCASGPCKNNGFCSERWGGFSCDCPVGFGGKDCR. The Laminin G-like 2 domain maps to 1751–1933; that stretch reads AHPYHFQGNG…SHRVNVEPGC (183 aa). N-linked (GlcNAc...) asparagine glycosylation occurs at asparagine 1759. Disulfide bonds link cysteine 1904–cysteine 1933, cysteine 1939–cysteine 1950, cysteine 1944–cysteine 1959, cysteine 1961–cysteine 1970, cysteine 1974–cysteine 1985, cysteine 1979–cysteine 1997, cysteine 1999–cysteine 2008, cysteine 2016–cysteine 2029, and cysteine 2031–cysteine 2041. The EGF-like 5; calcium-binding domain maps to 1935-1971; sequence VTNPCASGPCPPHADCKDLWQTFSCTCRPGYYGPGCV. At aspartate 1952 the chain carries (3R)-3-hydroxyaspartate. Residues 1972 to 2002 enclose the EGF-like 6; calcium-binding domain; it reads DACLLNPCQNQGSCRHLQGAPHGYTCDCVSG. Residues 2003–2042 form the EGF-like 7; calcium-binding domain; sequence YFGQHCEHRVDQQCPRGWWGSPTCGPCNCDVHKGFDPNCN. An N-linked (GlcNAc...) asparagine glycan is attached at asparagine 2042. The 36-residue stretch at 2044–2079 folds into the EGF-like 8; calcium-binding domain; it reads TNGQCHCKEFHYRPRGSDSCLPCDCYPVGSTSRSCA. 5 disulfides stabilise this stretch: cysteine 2048-cysteine 2063, cysteine 2050-cysteine 2066, cysteine 2068-cysteine 2078, cysteine 2087-cysteine 2096, and cysteine 2099-cysteine 2111. Positions 2066 to 2113 constitute a Laminin EGF-like domain; that stretch reads CDCYPVGSTSRSCAPHSGQCPCRPGALGRQCNSCDSPFAEVTASGCRV. At tyrosine 2115 the chain carries Phosphotyrosine. Residues asparagine 2166, asparagine 2185, asparagine 2375, asparagine 2465, and asparagine 2497 are each glycosylated (N-linked (GlcNAc...) asparagine). The interval 2353 to 2388 is disordered; that stretch reads LLPSQASQPSPSEVLPTSSNAENATASSVVSPPAPL. Residues 2355–2383 show a composition bias toward low complexity; sequence PSQASQPSPSEVLPTSSNAENATASSVVS. In terms of domain architecture, GAIN-B spans 2357–2521; sequence QASQPSPSEV…GVLMDASPRE (165 aa). Intrachain disulfides connect cysteine 2471-cysteine 2503 and cysteine 2491-cysteine 2505. A GPS region spans residues 2471–2521; sequence CVQWDPPGPTDQHGMWTARDCELVHRNGSHARCRCSRTGTFGVLMDASPRE. A helical transmembrane segment spans residues 2532 to 2552; the sequence is VFTHVVVAVSVTALVLTAAVL. Residues 2553-2563 are Cytoplasmic-facing; the sequence is LSLRSLKSNVR. The helical transmembrane segment at 2564–2584 threads the bilayer; it reads GIHANVAAALGVAELLFLLGI. Residues 2585-2592 lie on the Extracellular side of the membrane; sequence HRTHNQLL. The helical transmembrane segment at 2593–2613 threads the bilayer; the sequence is CTAVAILLHYFFLSTFAWLLV. The Cytoplasmic segment spans residues 2614–2634; sequence QGLHLYRMQVEPRNVDRGAMR. Residues 2635–2655 traverse the membrane as a helical segment; sequence FYHALGWGVPAVLLGLAVGLD. The Extracellular portion of the chain corresponds to 2656 to 2673; the sequence is PEGYGNPDFCWISIHEPL. A helical transmembrane segment spans residues 2674-2694; sequence IWSFAGPIVLVIVMNGTMFLL. Residues 2695 to 2716 lie on the Cytoplasmic side of the membrane; the sequence is AARTSCSTGQREAKKTSVLTLR. Residues 2717 to 2737 traverse the membrane as a helical segment; sequence SSFLLLLLVSASWLFGLLAVN. Residues 2738–2744 are Extracellular-facing; sequence HSILAFH. The helical transmembrane segment at 2745–2765 threads the bilayer; that stretch reads YLHAGLCGLQGLAVLLLFCVL. At 2766–3301 the chain is on the cytoplasmic side; it reads NADARAAWTP…SEVPRSEGHS (536 aa). Disordered stretches follow at residues 2823 to 2844, 2879 to 2919, and 2969 to 2992; these read SSAR…YLRD, AGAD…RPLR, and SNKD…TSLG. The span at 2881 to 2891 shows a compositional bias: acidic residues; the sequence is ADSDSDSDLSL. The segment covering 2910–2919 has biased composition (basic residues); it reads TRGRFQRPLR. Tyrosine 3042 is subject to Phosphotyrosine. Residues 3083 to 3301 form a disordered region; sequence APVLHPLSRP…SEVPRSEGHS (219 aa). Serine 3090 carries the post-translational modification Phosphoserine. Residues 3094 to 3111 show a composition bias toward basic and acidic residues; sequence SQERLDTAPARLEARDRG. Composition is skewed to low complexity over residues 3168 to 3189 and 3239 to 3261; these read SPQR…SLSR and LSSI…STPS. Residues 3276–3289 show a composition bias toward polar residues; it reads TPRSATSHSISELS.

This sequence belongs to the G-protein coupled receptor 2 family. LN-TM7 subfamily. In terms of tissue distribution, expressed in the CNS and in the eye.

The protein resides in the cell membrane. In terms of biological role, receptor that may have an important role in cell/cell signaling during nervous system formation. The protein is Cadherin EGF LAG seven-pass G-type receptor 3 (Celsr3) of Mus musculus (Mouse).